Here is a 106-residue protein sequence, read N- to C-terminus: Large ribosomal subunit protein uL24 (106 aa).

Belongs to the universal ribosomal protein uL24 family. As to quaternary structure, part of the 50S ribosomal subunit.

Functionally, one of two assembly initiator proteins, it binds directly to the 5'-end of the 23S rRNA, where it nucleates assembly of the 50S subunit. Its function is as follows. One of the proteins that surrounds the polypeptide exit tunnel on the outside of the subunit. The sequence is that of Large ribosomal subunit protein uL24 from Blochmanniella pennsylvanica (strain BPEN).